The primary structure comprises 292 residues: Peroxisomal 2,4-dienoyl-CoA reductase [(3E)-enoyl-CoA-producing] (292 aa).

Residues 35 to 40 (GGGSGI), 60 to 64 (RSLPR), and D86 contribute to the NADP(+) site. R60 is a binding site for substrate. Substrate-binding positions include R88, F118, and 126 to 128 (SFN). K151 carries the post-translational modification N6-acetyllysine. NADP(+) is bound by residues K182 and 208-214 (PGAISGT). Substrate is bound at residue R219. S287 is modified (phosphoserine). Residues 290–292 (AKL) carry the Microbody targeting signal motif. K291 carries the post-translational modification N6-acetyllysine.

The protein belongs to the short-chain dehydrogenases/reductases (SDR) family. 2,4-dienoyl-CoA reductase subfamily. As to quaternary structure, monomer, dimer and oligomer.

It is found in the peroxisome. The catalysed reaction is a (2E,4Z)-dienoyl-CoA + NADPH + H(+) = a 4,5-saturated-(3E)-enoyl-CoA + NADP(+). It carries out the reaction a (2E,4E)-dienoyl-CoA + NADPH + H(+) = a 4,5-saturated-(3E)-enoyl-CoA + NADP(+). The enzyme catalyses (2E,4E)-hexadienoyl-CoA + NADPH + H(+) = (3E)-hexenoyl-CoA + NADP(+). It catalyses the reaction (2E,4E)-decadienoyl-CoA + NADPH + H(+) = (3E)-decenoyl-CoA + NADP(+). The catalysed reaction is (2E,4Z,7Z,10Z,13Z,16Z,19Z)-docosaheptaenoyl-CoA + NADPH + H(+) = (3E,7Z,10Z,13Z,16Z,19Z)-docosahexaenoyl-CoA + NADP(+). Its function is as follows. Auxiliary enzyme of beta-oxidation. Participates in the degradation of unsaturated fatty enoyl-CoA esters having double bonds in both even- and odd-numbered positions in peroxisome. Catalyzes the NADP-dependent reduction of 2,4-dienoyl-CoA to yield trans-3-enoyl-CoA. Has activity towards short and medium chain 2,4-dienoyl-CoAs, but also towards 2,4,7,10,13,16,19-docosaheptaenoyl-CoA, suggesting that it does not constitute a rate limiting step in the peroxisomal degradation of docosahexaenoic acid. This chain is Peroxisomal 2,4-dienoyl-CoA reductase [(3E)-enoyl-CoA-producing] (Decr2), found in Rattus norvegicus (Rat).